Reading from the N-terminus, the 228-residue chain is 2-C-methyl-D-erythritol 4-phosphate cytidylyltransferase (228 aa).

Belongs to the IspD/TarI cytidylyltransferase family. IspD subfamily.

The enzyme catalyses 2-C-methyl-D-erythritol 4-phosphate + CTP + H(+) = 4-CDP-2-C-methyl-D-erythritol + diphosphate. It participates in isoprenoid biosynthesis; isopentenyl diphosphate biosynthesis via DXP pathway; isopentenyl diphosphate from 1-deoxy-D-xylulose 5-phosphate: step 2/6. Catalyzes the formation of 4-diphosphocytidyl-2-C-methyl-D-erythritol from CTP and 2-C-methyl-D-erythritol 4-phosphate (MEP). This Dechloromonas aromatica (strain RCB) protein is 2-C-methyl-D-erythritol 4-phosphate cytidylyltransferase.